The following is a 466-amino-acid chain: ATP synthase subunit beta (466 aa).

156-163 contacts ATP; that stretch reads GGAGVGKT.

This sequence belongs to the ATPase alpha/beta chains family. In terms of assembly, F-type ATPases have 2 components, CF(1) - the catalytic core - and CF(0) - the membrane proton channel. CF(1) has five subunits: alpha(3), beta(3), gamma(1), delta(1), epsilon(1). CF(0) has three main subunits: a(1), b(2) and c(9-12). The alpha and beta chains form an alternating ring which encloses part of the gamma chain. CF(1) is attached to CF(0) by a central stalk formed by the gamma and epsilon chains, while a peripheral stalk is formed by the delta and b chains.

The protein localises to the cell membrane. The catalysed reaction is ATP + H2O + 4 H(+)(in) = ADP + phosphate + 5 H(+)(out). Its function is as follows. Produces ATP from ADP in the presence of a proton gradient across the membrane. The catalytic sites are hosted primarily by the beta subunits. The polypeptide is ATP synthase subunit beta (Buchnera aphidicola subsp. Schizaphis graminum (strain Sg)).